A 594-amino-acid polypeptide reads, in one-letter code: Beta-fructofuranosidase, insoluble isoenzyme CWINV3 (594 aa).

Residues 1–28 form the signal peptide; it reads MAKLNRSNIGLSLLLSMFLANFITDLEA. Substrate-binding positions include 50 to 53, Gln69, Trp77, and 113 to 114; these read WMND and WS. The active site involves Asp53. An N-linked (GlcNAc...) asparagine glycan is attached at Asn147. Position 179–180 (179–180) interacts with substrate; it reads RD. A glycan (N-linked (GlcNAc...) asparagine) is linked at Asn217. Residue Glu235 coordinates substrate. N-linked (GlcNAc...) asparagine glycans are attached at residues Asn297 and Asn329. A disulfide bridge links Cys428 with Cys480.

The protein belongs to the glycosyl hydrolase 32 family. As to expression, expressed in seedlings, leaves, flowers, and seeds.

The protein resides in the secreted. Its subcellular location is the extracellular space. The protein localises to the apoplast. It localises to the cell wall. The enzyme catalyses Hydrolysis of terminal, non-reducing (2-&gt;1)- and (2-&gt;6)-linked beta-D-fructofuranose residues in fructans.. 6-fructan exohydrolase that can use phlein, levan, neokestose, levanbiose, 6-kestose, and 1-kestose as substrates. In Arabidopsis thaliana (Mouse-ear cress), this protein is Beta-fructofuranosidase, insoluble isoenzyme CWINV3 (CWINV3).